The chain runs to 771 residues: Polymeric immunoglobulin receptor (771 aa).

An N-terminal signal peptide occupies residues 1–18; sequence MRLYLFTLLVTVFSGVST. The Extracellular segment spans residues 19 to 645; it reads KSPIFGPQEV…DGQSRSSSSK (627 aa). The region spanning 21–120 is the Ig-like V-type 1; required for binding to polymeric IgA and IgM domain; the sequence is PIFGPQEVSS…GLGTSNRGLS (100 aa). A disulfide bridge connects residues Cys40 and Cys110. Asn90, Asn147, Asn170, and Asn206 each carry an N-linked (GlcNAc...) asparagine glycan. 4 consecutive Ig-like V-type domains span residues 135-237, 245-351, 352-457, and 463-563; these read SDTH…DLQV, LYKD…ESTI, PNRR…LQVA, and PNLE…IYIA. 3 disulfides stabilise this stretch: Cys152–Cys220, Cys257–Cys324, and Cys370–Cys440. 2 N-linked (GlcNAc...) asparagine glycosylation sites follow: Asn420 and Asn471. Cysteines 484 and 546 form a disulfide. Positions 622–641 are disordered; sequence QAQENRASGDAGSADGQSRS. Residues 627–641 show a composition bias toward low complexity; that stretch reads RASGDAGSADGQSRS. The helical transmembrane segment at 646 to 668 threads the bilayer; that stretch reads VLFSTLVPLGLVLAVGAIAVWVA. Residues 669-771 lie on the Cytoplasmic side of the membrane; it reads RVRHRKNVDR…AQVHDGPQEA (103 aa). Ser680, Ser689, Ser696, and Ser742 each carry phosphoserine.

In terms of assembly, interacts (mainly via CDR1-like domain) with dimeric IgA. Interacts (mainly via CDR2-like domain) with pentameric IgM. Either free or part of the secretory IgA (sIgA) complex that consists of two, four or five IgA monomers, and two additional non-Ig polypeptides, namely the JCHAIN and the secretory component (the proteolytic product of PIGR). Free secretory component interacts with bacterial antigens toxA of C.difficile and eae of E.coli. Post-translationally, N-glycosylated. N-glycosylation is required for anchoring IgA molecules to mucus, but is not necessary for Ig binding.

It localises to the cell membrane. The protein localises to the secreted. Mediates selective transcytosis of polymeric IgA and IgM across mucosal epithelial cells. Binds polymeric IgA and IgM at the basolateral surface of epithelial cells. The complex is then transported across the cell to be secreted at the apical surface. During this process, a cleavage occurs that separates the extracellular (known as the secretory component) from the transmembrane segment. Functionally, through its N-linked glycans ensures anchoring of secretory IgA (sIgA) molecules to mucus lining the epithelial surface to neutralize extracellular pathogens. On its own (free form) may act as a non-specific microbial scavenger to prevent pathogen interaction with epithelial cells. The sequence is that of Polymeric immunoglobulin receptor (Pigr) from Mus musculus (Mouse).